The sequence spans 429 residues: Serine hydroxymethyltransferase (429 aa).

(6S)-5,6,7,8-tetrahydrofolate-binding positions include L126 and 130 to 132 (GHL). K235 is subject to N6-(pyridoxal phosphate)lysine. Residue 359-361 (SPF) participates in (6S)-5,6,7,8-tetrahydrofolate binding.

It belongs to the SHMT family. Homodimer. Pyridoxal 5'-phosphate serves as cofactor.

It is found in the cytoplasm. The catalysed reaction is (6R)-5,10-methylene-5,6,7,8-tetrahydrofolate + glycine + H2O = (6S)-5,6,7,8-tetrahydrofolate + L-serine. The protein operates within one-carbon metabolism; tetrahydrofolate interconversion. Its pathway is amino-acid biosynthesis; glycine biosynthesis; glycine from L-serine: step 1/1. Catalyzes the reversible interconversion of serine and glycine with tetrahydrofolate (THF) serving as the one-carbon carrier. This reaction serves as the major source of one-carbon groups required for the biosynthesis of purines, thymidylate, methionine, and other important biomolecules. Also exhibits THF-independent aldolase activity toward beta-hydroxyamino acids, producing glycine and aldehydes, via a retro-aldol mechanism. The chain is Serine hydroxymethyltransferase from Parasynechococcus marenigrum (strain WH8102).